The sequence spans 68 residues: Long neurotoxin 1 (68 aa).

Disulfide bonds link C3–C20, C13–C41, C26–C30, C45–C56, and C57–C62.

It belongs to the three-finger toxin family. Long-chain subfamily. Type II alpha-neurotoxin sub-subfamily. As to expression, expressed by the venom gland.

The protein resides in the secreted. Binds with high affinity to muscular (alpha-1/CHRNA1) and neuronal (alpha-7/CHRNA7) nicotinic acetylcholine receptor (nAChR) and inhibits acetylcholine from binding to the receptor, thereby impairing neuromuscular and neuronal transmission. This Aspidelaps scutatus (Shield-nose snake) protein is Long neurotoxin 1.